Consider the following 208-residue polypeptide: Putative archaetidylserine decarboxylase proenzyme (208 aa).

Ser171 functions as the Schiff-base intermediate with substrate; via pyruvic acid in the catalytic mechanism. The residue at position 171 (Ser171) is a Pyruvic acid (Ser); by autocatalysis.

This sequence belongs to the phosphatidylserine decarboxylase family. PSD-A subfamily. Heterodimer of a large membrane-associated beta subunit and a small pyruvoyl-containing alpha subunit. Pyruvate is required as a cofactor. Post-translationally, is synthesized initially as an inactive proenzyme. Formation of the active enzyme involves a self-maturation process in which the active site pyruvoyl group is generated from an internal serine residue via an autocatalytic post-translational modification. Two non-identical subunits are generated from the proenzyme in this reaction, and the pyruvate is formed at the N-terminus of the alpha chain, which is derived from the carboxyl end of the proenzyme. The post-translation cleavage follows an unusual pathway, termed non-hydrolytic serinolysis, in which the side chain hydroxyl group of the serine supplies its oxygen atom to form the C-terminus of the beta chain, while the remainder of the serine residue undergoes an oxidative deamination to produce ammonia and the pyruvoyl prosthetic group on the alpha chain.

It is found in the cell membrane. The catalysed reaction is archaetidylserine + H(+) = archaetidylethanolamine + CO2. Its function is as follows. Catalyzes the formation of archaetidylethanolamine (PtdEtn) from archaetidylserine (PtdSer). The protein is Putative archaetidylserine decarboxylase proenzyme of Methanococcoides burtonii (strain DSM 6242 / NBRC 107633 / OCM 468 / ACE-M).